A 327-amino-acid chain; its full sequence is D-alanine--D-alanine ligase (327 aa).

Positions 113 to 312 constitute an ATP-grasp domain; it reads KRLWMTHDLS…YEDFVMQVVA (200 aa). Residue 139–194 participates in ATP binding; the sequence is VADLGLPLIVKPAREGSSIGLSKVTDASQMREAFEKAAALDNDVIAETFIDGAELT. Residues aspartate 266, glutamate 279, and asparagine 281 each contribute to the Mg(2+) site.

The protein belongs to the D-alanine--D-alanine ligase family. Requires Mg(2+) as cofactor. It depends on Mn(2+) as a cofactor.

It is found in the cytoplasm. The enzyme catalyses 2 D-alanine + ATP = D-alanyl-D-alanine + ADP + phosphate + H(+). It participates in cell wall biogenesis; peptidoglycan biosynthesis. In terms of biological role, cell wall formation. This Cupriavidus pinatubonensis (strain JMP 134 / LMG 1197) (Cupriavidus necator (strain JMP 134)) protein is D-alanine--D-alanine ligase.